Here is a 215-residue protein sequence, read N- to C-terminus: Cytochrome c biogenesis ATP-binding export protein CcmA (215 aa).

The 213-residue stretch at 3–215 (LEAENLAGER…MAAFSVEDIA (213 aa)) folds into the ABC transporter domain. 35 to 42 (GPNGSGKS) contributes to the ATP binding site.

It belongs to the ABC transporter superfamily. CcmA exporter (TC 3.A.1.107) family. The complex is composed of two ATP-binding proteins (CcmA) and two transmembrane proteins (CcmB).

The protein resides in the cell inner membrane. The catalysed reaction is heme b(in) + ATP + H2O = heme b(out) + ADP + phosphate + H(+). Part of the ABC transporter complex CcmAB involved in the biogenesis of c-type cytochromes; once thought to export heme, this seems not to be the case, but its exact role is uncertain. Responsible for energy coupling to the transport system. In Brucella abortus (strain 2308), this protein is Cytochrome c biogenesis ATP-binding export protein CcmA.